Consider the following 182-residue polypeptide: Epididymal-specific lipocalin-10 (182 aa).

An N-terminal signal peptide occupies residues 1–19 (MKLEMALSIALALAVVSWT). N-linked (GlcNAc...) asparagine glycosylation is found at Asn31 and Asn144. Cys85 and Cys176 are joined by a disulfide. Lys165 is modified (N6-acetyllysine).

It belongs to the calycin superfamily. Lipocalin family. As to expression, expressed in epididymis.

The protein localises to the secreted. Its function is as follows. May play a role in male fertility. May act as a retinoid carrier protein within the epididymis. The chain is Epididymal-specific lipocalin-10 (Lcn10) from Mus musculus (Mouse).